A 342-amino-acid chain; its full sequence is Isopentenyl-diphosphate delta-isomerase (342 aa).

11–12 (RK) is a substrate binding site. FMN is bound by residues Ser68, 69–71 (SMT), Ser99, and Asn127. 99-101 (SMR) is a substrate binding site. Gln162 contacts substrate. Position 163 (Glu163) interacts with Mg(2+). FMN-binding positions include Lys194, Thr224, 274–276 (GLK), and 295–296 (AG).

This sequence belongs to the IPP isomerase type 2 family. Homooctamer. Dimer of tetramers. FMN serves as cofactor. It depends on NADPH as a cofactor. Mg(2+) is required as a cofactor.

The protein resides in the cytoplasm. It catalyses the reaction isopentenyl diphosphate = dimethylallyl diphosphate. Functionally, involved in the biosynthesis of isoprenoids. Catalyzes the 1,3-allylic rearrangement of the homoallylic substrate isopentenyl (IPP) to its allylic isomer, dimethylallyl diphosphate (DMAPP). The sequence is that of Isopentenyl-diphosphate delta-isomerase from Rickettsia peacockii (strain Rustic).